A 118-amino-acid polypeptide reads, in one-letter code: Elongin-B (118 aa).

At Met1 the chain carries N-acetylmethionine. The Ubiquitin-like domain maps to 1–66; that stretch reads MDVFLMIRRH…LGECGFTSQT (66 aa). Thr84 bears the Phosphothreonine mark. Residues 92-118 are disordered; the sequence is PFSSPPELPDVMKPQDSGSSANEQAVQ. Residues 107–118 are compositionally biased toward polar residues; the sequence is DSGSSANEQAVQ. A phosphoserine mark is found at Ser108 and Ser111.

This sequence belongs to the Elongin B family. As to quaternary structure, heterotrimer of an A (ELOA, ELOA2 or ELOA3P), ELOB and ELOC subunit. The elongin BC complex interacts with EPOP; leading to recruit the elongin BC complex to Polycomb group (PcG) target genes, thereby restricting excessive activity of the PRC2/EED-EZH2 complex. Component of multiple cullin-RING E3 ubiquitin-protein ligase complexes composed of Elongin BC (ELOB and ELOC), a cullin (either CUL2 or CUL5), a catalytic subunit (either RBX1 or RNF7/RBX2), as well as a substrate adapter protein that can be either ASB2, ASB9, ASB11, KLHDC2, KLHDC3, KLHDC10, APPBP2, FEM1A, FEM1B, FEM1C, LRR1, PCMTD1, SOCS1, SOCS2, SOCS5, SPSB1, SPSB3, ELOA, VHL, WSB1 or RAB40C. As part of the Elongin BC E3 ubiquitin ligase complex; interacts with NRBP1. May also interact with DCUN1D1, DCUN1D2, DCUN1D3 and DCUN1D5. May form oligomers as a KLHDC2/KLHDC3-ELOB-ELOC complex; this interaction is autoinhibitory for the E3 ligase complex as the substrate-binding site of KLHDC2/KLHDC3 is blocked in the oligomer. In terms of assembly, (Microbial infection) Following infection by HIV-1 virus, component of a cullin-5-RING E3 ubiquitin-protein ligase complex (ECS complex) hijacked by the HIV-1 Vif protein. (Microbial infection) Substrate adapter protein can be a viral protein such as HIV Vif. As to quaternary structure, (Microbial infection) Interacts with molluscum contagiosum virus MC132. In terms of assembly, (Microbial infection) Interacts with herpes virus 8 virus protein LANA1.

It localises to the nucleus. It functions in the pathway protein modification; protein ubiquitination. Functionally, SIII, also known as elongin, is a general transcription elongation factor that increases the RNA polymerase II transcription elongation past template-encoded arresting sites. Subunit A is transcriptionally active and its transcription activity is strongly enhanced by binding to the dimeric complex of the SIII regulatory subunits B and C (elongin BC complex). In embryonic stem cells, the elongin BC complex is recruited by EPOP to Polycomb group (PcG) target genes in order generate genomic region that display both active and repressive chromatin properties, an important feature of pluripotent stem cells. In terms of biological role, core component of multiple cullin-2 and cullin-5-RING E3 ubiquitin-protein ligase complexes (ECS complexes), which mediate the ubiquitination of target proteins. By binding to BC-box motifs it seems to link target recruitment subunits, like VHL and members of the SOCS box family, to Cullin/RBX1 modules that activate E2 ubiquitination enzymes. Component the von Hippel-Lindau ubiquitination complex CBC(VHL). A number of ECS complexes (containing either KLHDC2, KLHDC3, KLHDC10, APPBP2, FEM1A, FEM1B or FEM1C as substrate-recognition component) are part of the DesCEND (destruction via C-end degrons) pathway, which recognizes a C-degron located at the extreme C terminus of target proteins, leading to their ubiquitination and degradation. The ECS(ASB9) complex mediates ubiquitination and degradation of CKB. As part of a multisubunit ubiquitin ligase complex, polyubiquitinates monoubiquitinated POLR2A. ECS(LRR1) ubiquitinates MCM7 and promotes CMG replisome disassembly by VCP and chromatin extraction during S-phase. As part of the ECS(RAB40C) complex, mediates ANKRD28 ubiquitination and degradation, thereby inhibiting protein phosphatase 6 (PP6) complex activity and focal adhesion assembly during cell migration. (Microbial infection) Following infection by HIV-1 virus, component of a cullin-5-RING E3 ubiquitin-protein ligase complex (ECS complex) hijacked by the HIV-1 Vif protein, which catalyzes ubiquitination and degradation of APOBEC3F and APOBEC3G. The complex can also ubiquitinate APOBEC3H to some extent. This chain is Elongin-B, found in Homo sapiens (Human).